The primary structure comprises 376 residues: Sterol 24-C-methyltransferase (376 aa).

This sequence belongs to the class I-like SAM-binding methyltransferase superfamily. Erg6/SMT family.

It catalyses the reaction zymosterol + S-adenosyl-L-methionine = fecosterol + S-adenosyl-L-homocysteine + H(+). It functions in the pathway steroid metabolism; ergosterol biosynthesis; ergosterol from zymosterol: step 1/5. With respect to regulation, substrate analogs 25-azalanosterol and 24(R,S),25-epiminolanosterol act as inhibitors. In terms of biological role, sterol 24-C-methyltransferase; part of the third module of ergosterol biosynthesis pathway that includes the late steps of the pathway. ERG6 catalyzes the methyl transfer from S-adenosyl-methionine to the C-24 of zymosterol to form fecosterol. The third module or late pathway involves the ergosterol synthesis itself through consecutive reactions that mainly occur in the endoplasmic reticulum (ER) membrane. Firstly, the squalene synthase ERG9 catalyzes the condensation of 2 farnesyl pyrophosphate moieties to form squalene, which is the precursor of all steroids. Squalene synthase is crucial for balancing the incorporation of farnesyl diphosphate (FPP) into sterol and nonsterol isoprene synthesis. Secondly, the squalene epoxidase ERG1 catalyzes the stereospecific oxidation of squalene to (S)-2,3-epoxysqualene, which is considered to be a rate-limiting enzyme in steroid biosynthesis. Then, the lanosterol synthase ERG7 catalyzes the cyclization of (S)-2,3 oxidosqualene to lanosterol, a reaction that forms the sterol core. In the next steps, lanosterol is transformed to zymosterol through a complex process involving various demethylation, reduction and desaturation reactions. The lanosterol 14-alpha-demethylase ERG11 (also known as CYP51) catalyzes C14-demethylation of lanosterol to produce 4,4'-dimethyl cholesta-8,14,24-triene-3-beta-ol, which is critical for ergosterol biosynthesis. The C-14 reductase ERG24 reduces the C14=C15 double bond of 4,4-dimethyl-cholesta-8,14,24-trienol to produce 4,4-dimethyl-cholesta-8,24-dienol. 4,4-dimethyl-cholesta-8,24-dienol is substrate of the C-4 demethylation complex ERG25-ERG26-ERG27 in which ERG25 catalyzes the three-step monooxygenation required for the demethylation of 4,4-dimethyl and 4alpha-methylsterols, ERG26 catalyzes the oxidative decarboxylation that results in a reduction of the 3-beta-hydroxy group at the C-3 carbon to an oxo group, and ERG27 is responsible for the reduction of the keto group on the C-3. ERG28 has a role as a scaffold to help anchor ERG25, ERG26 and ERG27 to the endoplasmic reticulum and ERG29 regulates the activity of the iron-containing C4-methylsterol oxidase ERG25. Then, the sterol 24-C-methyltransferase ERG6 catalyzes the methyl transfer from S-adenosyl-methionine to the C-24 of zymosterol to form fecosterol. The C-8 sterol isomerase ERG2 catalyzes the reaction which results in unsaturation at C-7 in the B ring of sterols and thus converts fecosterol to episterol. The sterol-C5-desaturase ERG3 then catalyzes the introduction of a C-5 double bond in the B ring to produce 5-dehydroepisterol. The C-22 sterol desaturase ERG5 further converts 5-dehydroepisterol into ergosta-5,7,22,24(28)-tetraen-3beta-ol by forming the C-22(23) double bond in the sterol side chain. Finally, ergosta-5,7,22,24(28)-tetraen-3beta-ol is substrate of the C-24(28) sterol reductase ERG4 to produce ergosterol. The sequence is that of Sterol 24-C-methyltransferase from Candida albicans (strain SC5314 / ATCC MYA-2876) (Yeast).